Here is a 558-residue protein sequence, read N- to C-terminus: Dihydroxy-acid dehydratase (558 aa).

D78 lines the Mg(2+) pocket. Residue C119 coordinates [2Fe-2S] cluster. Residues D120 and K121 each coordinate Mg(2+). Position 121 is an N6-carboxylysine (K121). C191 is a binding site for [2Fe-2S] cluster. E443 contacts Mg(2+). Catalysis depends on S469, which acts as the Proton acceptor.

Belongs to the IlvD/Edd family. As to quaternary structure, homodimer. The cofactor is [2Fe-2S] cluster. Requires Mg(2+) as cofactor.

It carries out the reaction (2R)-2,3-dihydroxy-3-methylbutanoate = 3-methyl-2-oxobutanoate + H2O. The enzyme catalyses (2R,3R)-2,3-dihydroxy-3-methylpentanoate = (S)-3-methyl-2-oxopentanoate + H2O. It functions in the pathway amino-acid biosynthesis; L-isoleucine biosynthesis; L-isoleucine from 2-oxobutanoate: step 3/4. Its pathway is amino-acid biosynthesis; L-valine biosynthesis; L-valine from pyruvate: step 3/4. Functions in the biosynthesis of branched-chain amino acids. Catalyzes the dehydration of (2R,3R)-2,3-dihydroxy-3-methylpentanoate (2,3-dihydroxy-3-methylvalerate) into 2-oxo-3-methylpentanoate (2-oxo-3-methylvalerate) and of (2R)-2,3-dihydroxy-3-methylbutanoate (2,3-dihydroxyisovalerate) into 2-oxo-3-methylbutanoate (2-oxoisovalerate), the penultimate precursor to L-isoleucine and L-valine, respectively. This chain is Dihydroxy-acid dehydratase, found in Solidesulfovibrio magneticus (strain ATCC 700980 / DSM 13731 / RS-1) (Desulfovibrio magneticus).